The chain runs to 193 residues: Segregation and condensation protein B (193 aa).

The protein belongs to the ScpB family. As to quaternary structure, homodimer. Homodimerization may be required to stabilize the binding of ScpA to the Smc head domains. Component of a cohesin-like complex composed of ScpA, ScpB and the Smc homodimer, in which ScpA and ScpB bind to the head domain of Smc. The presence of the three proteins is required for the association of the complex with DNA.

The protein localises to the cytoplasm. Functionally, participates in chromosomal partition during cell division. May act via the formation of a condensin-like complex containing Smc and ScpA that pull DNA away from mid-cell into both cell halves. The sequence is that of Segregation and condensation protein B from Clostridium botulinum (strain ATCC 19397 / Type A).